Here is a 311-residue protein sequence, read N- to C-terminus: Olfactory receptor 4K1 (311 aa).

Residues 1–25 (MAHTNESMVSEFVLLGLSNSWGLQL) are Extracellular-facing. A glycan (N-linked (GlcNAc...) asparagine) is linked at Asn-5. The helical transmembrane segment at 26-49 (FFFAIFSIVYVTSVLGNVLIIVII) threads the bilayer. Over 50–57 (SFDSHLNS) the chain is Cytoplasmic. Residues 58–79 (PMYFLLSNLSFIDICQSNFATP) form a helical membrane-spanning segment. Topologically, residues 80 to 100 (KMLVDFFIERKTISFEGCMAQ) are extracellular. The cysteines at positions 97 and 189 are disulfide-linked. Residues 101–120 (IFVLHSFVGSEMMLLVAMAY) traverse the membrane as a helical segment. The Cytoplasmic portion of the chain corresponds to 121 to 139 (DRFIAICKPLHYSTIMNRR). Residues 140–158 (LCVIFVSISWAVGVLHSVS) form a helical membrane-spanning segment. Topologically, residues 159 to 195 (HLAFTVDLPFCGPNEVDSFFCDLPLVIELACMDTYEM) are extracellular. The helical transmembrane segment at 196–219 (EIMTLTNSGLISLSCFLALIISYT) threads the bilayer. Residues 220 to 235 (IILIGVRCRSSSGSSK) are Cytoplasmic-facing. The chain crosses the membrane as a helical span at residues 236–258 (ALSTLTAHITVVILFFGPCIYFY). Residues 259–269 (IWPFSRLPVDK) are Extracellular-facing. A helical transmembrane segment spans residues 270 to 289 (FLSVFYTVCTPLLNPIIYSL). The Cytoplasmic portion of the chain corresponds to 290–311 (RNEDVKAAMWKLRNRHVNSWKN).

Belongs to the G-protein coupled receptor 1 family.

The protein resides in the cell membrane. Functionally, odorant receptor. In Homo sapiens (Human), this protein is Olfactory receptor 4K1 (OR4K1).